An 82-amino-acid polypeptide reads, in one-letter code: Small ribosomal subunit protein eS27 (82 aa).

The Zn(2+) site is built by cysteine 37, cysteine 40, cysteine 56, and cysteine 59.

This sequence belongs to the eukaryotic ribosomal protein eS27 family. In terms of assembly, component of the small ribosomal subunit. Mature ribosomes consist of a small (40S) and a large (60S) subunit. The 40S subunit contains about 32 different proteins and 1 molecule of RNA (18S). The 60S subunit contains 45 different proteins and 3 molecules of RNA (25S, 5.8S and 5S). The cofactor is Zn(2+).

It is found in the cytoplasm. Its function is as follows. Component of the ribosome, a large ribonucleoprotein complex responsible for the synthesis of proteins in the cell. The small ribosomal subunit (SSU) binds messenger RNAs (mRNAs) and translates the encoded message by selecting cognate aminoacyl-transfer RNA (tRNA) molecules. The large subunit (LSU) contains the ribosomal catalytic site termed the peptidyl transferase center (PTC), which catalyzes the formation of peptide bonds, thereby polymerizing the amino acids delivered by tRNAs into a polypeptide chain. The nascent polypeptides leave the ribosome through a tunnel in the LSU and interact with protein factors that function in enzymatic processing, targeting, and the membrane insertion of nascent chains at the exit of the ribosomal tunnel. In Candida albicans (strain SC5314 / ATCC MYA-2876) (Yeast), this protein is Small ribosomal subunit protein eS27 (RPS27).